A 606-amino-acid chain; its full sequence is Acetylcholinesterase (606 aa).

A signal peptide spans M1–A28. Residues C98 and C125 are joined by a disulfide bond. S231 (acyl-ester intermediate) is an active-site residue. Cysteines 285 and 296 form a disulfide. A glycan (N-linked (GlcNAc...) asparagine) is linked at N289. E358 serves as the catalytic Charge relay system. N-linked (GlcNAc...) asparagine glycosylation occurs at N374. C433 and C552 are oxidised to a cystine. The active-site Charge relay system is H471. Residue N484 is glycosylated (N-linked (GlcNAc...) asparagine).

The protein belongs to the type-B carboxylesterase/lipase family. In terms of assembly, isoform S is monomeric. Isoform T can form oligomers, including collagen-tailed forms. Post-translationally, the N-terminus is blocked. Liver and muscle contain both isoform T and isoform S. Venom gland predominantly contains isoform S.

The protein resides in the synapse. The protein localises to the secreted. Its subcellular location is the cell membrane. The enzyme catalyses acetylcholine + H2O = choline + acetate + H(+). Inhibited by active site inhibitors: edrophonium, trimethyl-(m-acetamidopheny1)-ammonium iodide, and trimethyl-(p-acetarnidopheny1)-ammonium iodide. Inhibited by both active and peripheral site inhibitors: decamethonium, and BW284c51. Inhibited by peripheral site inhibitors: snake acetylcholinesterase fasciculin-2, propidium, gallamine, D-tubocurarine, and tacrine. Also inhibited by antibodies Elec410 and Fab410. Functionally, in muscle, it terminates signal transduction at the neuromuscular junction by rapid hydrolysis of the acetylcholine released into the synaptic cleft. In liver, its function is unclear: it could serve as a safeguard against any diffusion of acetylcholine from synapses into the circulation. In venom, its toxic role is unclear: it could result in less musculatory control by rapidly hydrolyzing acetylcholine, or that it works synergistically with alkaline phosphatase (ALP) in paralyzing prey through hypotension. The protein is Acetylcholinesterase (ACHE) of Bungarus fasciatus (Banded krait).